We begin with the raw amino-acid sequence, 105 residues long: Larval cuticle protein 65Ag1 (105 aa).

The N-terminal stretch at 1–18 (MKFLIVFVALFAVALAAP) is a signal peptide. The Chitin-binding type R&amp;R domain occupies 34–103 (PESFKYDWET…PQGAHLPVAP (70 aa)).

Its function is as follows. Component of the cuticle of the larva. The chain is Larval cuticle protein 65Ag1 from Drosophila melanogaster (Fruit fly).